Consider the following 391-residue polypeptide: tRNA (cytosine(38)-C(5))-methyltransferase (391 aa).

The SAM-dependent MTase C5-type domain occupies 4-391 (LRVLELYSGV…VAKLIKILYE (388 aa)). S-adenosyl-L-methionine-binding positions include 13–15 (VGG), D34, 57–58 (IE), and S76. Residue C79 is part of the active site. S376 lines the S-adenosyl-L-methionine pocket.

This sequence belongs to the class I-like SAM-binding methyltransferase superfamily. C5-methyltransferase family. Ubiquitous. Higher expression in testis, ovary and thymus and at much lower levels in spleen, prostate, colon, small intestine, and peripheral blood leukocytes.

The protein localises to the cytoplasm. The catalysed reaction is cytidine(38) in tRNA + S-adenosyl-L-methionine = 5-methylcytidine(38) in tRNA + S-adenosyl-L-homocysteine + H(+). Functionally, specifically methylates cytosine 38 in the anticodon loop of tRNA(Asp). Has higher activity on tRNA(Asp) modified with queuosine at position 34. The sequence is that of tRNA (cytosine(38)-C(5))-methyltransferase (TRDMT1) from Homo sapiens (Human).